The primary structure comprises 363 residues: Protein-arginine kinase (363 aa).

Residues 24–254 (IVLSSRIRLA…AQLIEQERSA (231 aa)) enclose the Phosphagen kinase C-terminal domain. 27 to 31 (SSRIR) lines the ATP pocket. A phosphoarginine; by autocatalysis mark is found at arginine 29, arginine 40, and arginine 86. Residues histidine 92, arginine 125, and 176–180 (RASVM) contribute to the ATP site. Position 190 is a phosphoarginine; by autocatalysis (arginine 190). Residue 207–212 (RGIYGE) participates in ATP binding. Residues arginine 255, arginine 269, and arginine 272 each carry the phosphoarginine; by autocatalysis modification. Residues 337-342 (RDIRRA) carry the RDXXRA motif of the pArg binding pocket involved in allosteric regulation motif. A Phosphoarginine; by autocatalysis modification is found at arginine 346.

The protein belongs to the ATP:guanido phosphotransferase family. In terms of assembly, interacts with CtsR in its autophosphorylated form. Interacts with McsA in nonstressed as well as in heat-stressed cells, whereas strongly interacts with ClpC only in nonstressed cells. In terms of processing, autophosphorylated on Arg residues. Phosphorylation on Arg-40 and Arg-86 are up-regulated upon stress conditions.

The protein localises to the cytoplasm. The enzyme catalyses L-arginyl-[protein] + ATP = N(omega)-phospho-L-arginyl-[protein] + ADP + H(+). Its activity is regulated as follows. Appears to be allosterically activated by the binding of pArg-containing polypeptides to the pArg-binding pocket localized in the C-terminal domain of McsB. The McsB kinase is inhibited in nonstressed cells by direct interaction with ClpC; upon heat exposure, the interaction of McsB with ClpC is dramatically decreased, leading to McsB release and activation during heat stress. Its kinase activity is counteracted by the protein-arginine-phosphatase YwlE in vivo. Requires McsA for full kinase activity. Catalyzes the specific phosphorylation of arginine residues in a large number of proteins. Is part of the bacterial stress response system, where it is involved in regulating the global heat shock repressor CtsR; phosphorylates arginine residues in the winged helix-turn-helix domain of CtsR, thereby preventing its binding to DNA and consequently inducing the expression of repressed genes. The transcriptional repressor HrcA, the chaperone GroEL, the unfoldase ClpC, together with several ribosomal subunits, represent other physiological targets of McsB under stress conditions. Protein arginine phosphorylation has a physiologically important role and is involved in the regulation of many critical cellular processes, such as protein homeostasis, motility, competence, and stringent and stress responses, by regulating gene expression and protein activity. Functions as an adapter whose kinase activity is required for ClpCP-mediated degradation of CtsR during heat stress. Is required for the delocalization of competence proteins from the cell poles, probably via a role in the degradation of anchor proteins. This is Protein-arginine kinase from Bacillus subtilis (strain 168).